A 405-amino-acid chain; its full sequence is Protein PAG1 (405 aa).

An N-terminal signal peptide occupies residues methionine 1 to alanine 50. 4 N-linked (GlcNAc...) asparagine glycosylation sites follow: asparagine 55, asparagine 104, asparagine 256, and asparagine 351. Alanine 391 carries GPI-anchor amidated alanine lipidation. Residues aspartate 392–phenylalanine 405 constitute a propeptide, removed in mature form.

Its subcellular location is the cell membrane. This Trypanosoma brucei brucei protein is Protein PAG1 (PAG1).